A 255-amino-acid chain; its full sequence is Glutamate racemase (255 aa).

Substrate is bound by residues 7–8 (DS) and 39–40 (YG). Residue Cys-70 is the Proton donor/acceptor of the active site. Residue 71-72 (NT) coordinates substrate. The Proton donor/acceptor role is filled by Cys-181. Substrate is bound at residue 182 to 183 (TH).

Belongs to the aspartate/glutamate racemases family. Homodimer.

The catalysed reaction is L-glutamate = D-glutamate. It functions in the pathway cell wall biogenesis; peptidoglycan biosynthesis. Its function is as follows. Provides the (R)-glutamate required for cell wall biosynthesis. In Helicobacter pylori (strain J99 / ATCC 700824) (Campylobacter pylori J99), this protein is Glutamate racemase.